Consider the following 455-residue polypeptide: CDP-diacylglycerol--serine O-phosphatidyltransferase (455 aa).

PLD phosphodiesterase domains lie at 134–160 (VFGV…NNVY) and 356–383 (GDNT…NPRA).

This sequence belongs to the CDP-alcohol phosphatidyltransferase class-II family. In terms of assembly, multimeric.

It is found in the cytoplasm. Its subcellular location is the cell inner membrane. It catalyses the reaction a CDP-1,2-diacyl-sn-glycerol + L-serine = a 1,2-diacyl-sn-glycero-3-phospho-L-serine + CMP + H(+). This Haemophilus influenzae (strain ATCC 51907 / DSM 11121 / KW20 / Rd) protein is CDP-diacylglycerol--serine O-phosphatidyltransferase (pssA).